A 274-amino-acid chain; its full sequence is Methionine-binding lipoprotein MetQ (274 aa).

The signal sequence occupies residues 1-19 (MKKLFLGALLLVFAGVMAA). C20 is lipidated: N-palmitoyl cysteine. The S-diacylglycerol cysteine moiety is linked to residue C20.

The protein belongs to the NlpA lipoprotein family. As to quaternary structure, the complex is composed of two ATP-binding proteins (MetN), two transmembrane proteins (MetP) and a solute-binding protein (metQ).

The protein resides in the cell membrane. Functionally, part of the ABC transporter complex MetNPQ involved in methionine import. Binds the methionine and transfers it to the membrane-bound permease. It has also been shown to be involved in methionine sulfoxide transport. The chain is Methionine-binding lipoprotein MetQ (metQ) from Bacillus subtilis (strain 168).